Here is a 238-residue protein sequence, read N- to C-terminus: MTDTAENQTQNNWQAEHPRSIRSFVLRQSHMTAAQQRAIDTLWDSFGIDYQATPADLDANFGSNRPKILEIGFGMGTATAEIARRLPETDFLAIDVHGPGVGNLLKLINENHLENIRVMRHDAVEVIENMLQDGSLDGIHIFFPDPWHKKRHHKRRLIQAPFIAKLLPKLKTGGYIHLATDWEEYARQMLEVLSSFDSLQNTAADYAPTPDYRPETKFEARGKRLGHGVWDLVFKRMG.

Positions 70, 95, 122, and 145 each coordinate S-adenosyl-L-methionine. Aspartate 145 is an active-site residue. Substrate-binding positions include lysine 149, aspartate 181, and 216–219; that span reads TKFE.

The protein belongs to the class I-like SAM-binding methyltransferase superfamily. TrmB family.

It carries out the reaction guanosine(46) in tRNA + S-adenosyl-L-methionine = N(7)-methylguanosine(46) in tRNA + S-adenosyl-L-homocysteine. It functions in the pathway tRNA modification; N(7)-methylguanine-tRNA biosynthesis. Catalyzes the formation of N(7)-methylguanine at position 46 (m7G46) in tRNA. The chain is tRNA (guanine-N(7)-)-methyltransferase from Neisseria meningitidis serogroup C / serotype 2a (strain ATCC 700532 / DSM 15464 / FAM18).